The primary structure comprises 139 residues: GPI-anchored protein 53 (139 aa).

A signal peptide spans 1–17 (MKFQLLTLVSIATTTLA). Low complexity-rich tracts occupy residues 57-69 (TITS…TTTT) and 77-101 (TSTT…SSSS). The segment at 57-115 (TITSSSSTTTTTTAKKDKKTTSTTSASSTTTTSTKSNSTSPSSSSSKKHKSETASITKT) is disordered. N-linked (GlcNAc...) asparagine glycosylation is present at Asn-93. Residue Gly-116 is the site of GPI-anchor amidated glycine attachment. A propeptide spans 117-139 (GADSVAAAAAVGGPILAALALLL) (removed in mature form).

It is found in the cell membrane. This chain is GPI-anchored protein 53 (PGA53), found in Candida albicans (strain SC5314 / ATCC MYA-2876) (Yeast).